The sequence spans 321 residues: Cytochrome f (321 aa).

The N-terminal stretch at 1 to 38 (MKKNFYTISKTMSRSLKLILFSVFIGFSIFLIPQPTWA) is a signal peptide. Residues Tyr-39, Cys-59, Cys-62, and His-63 each contribute to the heme site. Residues 288-308 (VIGMIIFFIGVGLSQIMLVLK) form a helical membrane-spanning segment.

Belongs to the cytochrome f family. In terms of assembly, the 4 large subunits of the cytochrome b6-f complex are cytochrome b6, subunit IV (17 kDa polypeptide, PetD), cytochrome f and the Rieske protein, while the 4 small subunits are PetG, PetL, PetM and PetN. The complex functions as a dimer. Heme serves as cofactor.

The protein localises to the cellular thylakoid membrane. In terms of biological role, component of the cytochrome b6-f complex, which mediates electron transfer between photosystem II (PSII) and photosystem I (PSI), cyclic electron flow around PSI, and state transitions. The sequence is that of Cytochrome f from Prochlorococcus marinus (strain NATL1A).